Reading from the N-terminus, the 342-residue chain is Putative TPR repeat-containing protein R856 (342 aa).

TPR repeat units lie at residues 36–69 (VHIF…IFNG), 77–110 (FYSV…IKDM), 119–152 (VYAL…NEKL), 161–194 (AFVL…YREK), 203–236 (AFTI…FNKI), 245–278 (AFSL…YKNV), and 291–324 (ASCL…FEST).

This Acanthamoeba polyphaga mimivirus (APMV) protein is Putative TPR repeat-containing protein R856.